The chain runs to 225 residues: Ribonuclease 3 (225 aa).

The RNase III domain maps to leucine 5–glycine 127. Glutamate 40 serves as a coordination point for Mg(2+). The active site involves aspartate 44. Mg(2+)-binding residues include aspartate 113 and glutamate 116. Residue glutamate 116 is part of the active site. In terms of domain architecture, DRBM spans aspartate 154–lysine 224.

It belongs to the ribonuclease III family. Homodimer. The cofactor is Mg(2+).

The protein localises to the cytoplasm. It carries out the reaction Endonucleolytic cleavage to 5'-phosphomonoester.. Functionally, digests double-stranded RNA. Involved in the processing of primary rRNA transcript to yield the immediate precursors to the large and small rRNAs (23S and 16S). Processes some mRNAs, and tRNAs when they are encoded in the rRNA operon. Processes pre-crRNA and tracrRNA of type II CRISPR loci if present in the organism. The polypeptide is Ribonuclease 3 (Aromatoleum aromaticum (strain DSM 19018 / LMG 30748 / EbN1) (Azoarcus sp. (strain EbN1))).